The chain runs to 87 residues: Spermatid-specific protein S1 (87 aa).

The disordered stretch occupies residues 1–36 (TKSRYRNRRSRPRRRYGRRMRKTRCRRKGRRISRRP).

The protein localises to the nucleus. Its subcellular location is the chromosome. Involved in nuclear basic protein transition: histones are replaced by spermatid specific proteins which are themselves replaced by protamines in late spermatids. This is Spermatid-specific protein S1 from Scyliorhinus canicula (Small-spotted catshark).